Reading from the N-terminus, the 333-residue chain is 5-formaminoimidazole-4-carboxamide-1-(beta)-D-ribofuranosyl 5'-monophosphate synthetase (333 aa).

2 residues coordinate 5-amino-1-(5-phospho-beta-D-ribosyl)imidazole-4-carboxamide: His9 and Ser73. One can recognise an ATP-grasp domain in the interval Arg94–Asn324. Residues Pro124 to Tyr184 and Glu206 contribute to the ATP site. Asn230 lines the 5-amino-1-(5-phospho-beta-D-ribosyl)imidazole-4-carboxamide pocket. 2 residues coordinate Mg(2+): Glu269 and Glu282.

This sequence belongs to the phosphohexose mutase family. Requires Mg(2+) as cofactor. The cofactor is Mn(2+).

The enzyme catalyses 5-amino-1-(5-phospho-beta-D-ribosyl)imidazole-4-carboxamide + formate + ATP = 5-formamido-1-(5-phospho-D-ribosyl)imidazole-4-carboxamide + ADP + phosphate. It participates in purine metabolism; IMP biosynthesis via de novo pathway; 5-formamido-1-(5-phospho-D-ribosyl)imidazole-4-carboxamide from 5-amino-1-(5-phospho-D-ribosyl)imidazole-4-carboxamide (formate route): step 1/1. Its function is as follows. Catalyzes the ATP- and formate-dependent formylation of 5-aminoimidazole-4-carboxamide-1-beta-d-ribofuranosyl 5'-monophosphate (AICAR) to 5-formaminoimidazole-4-carboxamide-1-beta-d-ribofuranosyl 5'-monophosphate (FAICAR) in the absence of folates. The chain is 5-formaminoimidazole-4-carboxamide-1-(beta)-D-ribofuranosyl 5'-monophosphate synthetase from Sulfurisphaera tokodaii (strain DSM 16993 / JCM 10545 / NBRC 100140 / 7) (Sulfolobus tokodaii).